Consider the following 355-residue polypeptide: tRNA-specific 2-thiouridylase MnmA (355 aa).

Residues 8 to 15 (GMSGGVDS) and Met-34 each bind ATP. Cys-103 (nucleophile) is an active-site residue. Residues Cys-103 and Cys-199 are joined by a disulfide bond. Position 127 (Gly-127) interacts with ATP. Positions 149-151 (KDQ) are interaction with tRNA. The active-site Cysteine persulfide intermediate is Cys-199. The interval 305-306 (RY) is interaction with tRNA.

The protein belongs to the MnmA/TRMU family.

It localises to the cytoplasm. It catalyses the reaction S-sulfanyl-L-cysteinyl-[protein] + uridine(34) in tRNA + AH2 + ATP = 2-thiouridine(34) in tRNA + L-cysteinyl-[protein] + A + AMP + diphosphate + H(+). Functionally, catalyzes the 2-thiolation of uridine at the wobble position (U34) of tRNA, leading to the formation of s(2)U34. In Clostridium acetobutylicum (strain ATCC 824 / DSM 792 / JCM 1419 / IAM 19013 / LMG 5710 / NBRC 13948 / NRRL B-527 / VKM B-1787 / 2291 / W), this protein is tRNA-specific 2-thiouridylase MnmA.